Reading from the N-terminus, the 76-residue chain is Small ribosomal subunit protein bS18 (76 aa).

Belongs to the bacterial ribosomal protein bS18 family. Part of the 30S ribosomal subunit. Forms a tight heterodimer with protein bS6.

Binds as a heterodimer with protein bS6 to the central domain of the 16S rRNA, where it helps stabilize the platform of the 30S subunit. The protein is Small ribosomal subunit protein bS18 of Marinobacter nauticus (strain ATCC 700491 / DSM 11845 / VT8) (Marinobacter aquaeolei).